A 478-amino-acid polypeptide reads, in one-letter code: Protein nucleotidyltransferase YdiU (478 aa).

ATP contacts are provided by G84, G86, R87, K107, D119, G120, R170, and R177. D246 serves as the catalytic Proton acceptor. N247 and D256 together coordinate Mg(2+). Residue D256 coordinates ATP.

It belongs to the SELO family. The cofactor is Mg(2+). Mn(2+) is required as a cofactor.

It catalyses the reaction L-seryl-[protein] + ATP = 3-O-(5'-adenylyl)-L-seryl-[protein] + diphosphate. The catalysed reaction is L-threonyl-[protein] + ATP = 3-O-(5'-adenylyl)-L-threonyl-[protein] + diphosphate. The enzyme catalyses L-tyrosyl-[protein] + ATP = O-(5'-adenylyl)-L-tyrosyl-[protein] + diphosphate. It carries out the reaction L-histidyl-[protein] + UTP = N(tele)-(5'-uridylyl)-L-histidyl-[protein] + diphosphate. It catalyses the reaction L-seryl-[protein] + UTP = O-(5'-uridylyl)-L-seryl-[protein] + diphosphate. The catalysed reaction is L-tyrosyl-[protein] + UTP = O-(5'-uridylyl)-L-tyrosyl-[protein] + diphosphate. Nucleotidyltransferase involved in the post-translational modification of proteins. It can catalyze the addition of adenosine monophosphate (AMP) or uridine monophosphate (UMP) to a protein, resulting in modifications known as AMPylation and UMPylation. This chain is Protein nucleotidyltransferase YdiU, found in Shigella boydii serotype 18 (strain CDC 3083-94 / BS512).